A 95-amino-acid polypeptide reads, in one-letter code: 6 kDa early secretory antigenic target (95 aa).

The next 2 helical transmembrane spans lie at 11–43 (IEAAASAIQGNVTSIHSLLDEGKQSLTKLAAAW) and 49–85 (EAYQGVQQKWDATATELNNALQNLARTISEAGQAMAS). Residues 56 to 87 (QKWDATATELNNALQNLARTISEAGQAMASTE) adopt a coiled-coil conformation.

It belongs to the WXG100 family. ESAT-6 subfamily. Forms a tight 1:1 complex with EsxB (CFP-10).

The protein resides in the secreted. Its subcellular location is the host membrane. In terms of biological role, a secreted protein. Acts as a strong host T-cell antigen. Plays a number of roles in modulating the host's immune response to infection as well as being responsible for bacterial escape into the host cytoplasm. This Mycobacterium bovis (strain ATCC BAA-935 / AF2122/97) protein is 6 kDa early secretory antigenic target (esxA).